Reading from the N-terminus, the 500-residue chain is L-arabinose isomerase (500 aa).

Glu-306, Glu-333, His-350, and His-450 together coordinate Mn(2+).

The protein belongs to the arabinose isomerase family. As to quaternary structure, homohexamer. The cofactor is Mn(2+).

The enzyme catalyses beta-L-arabinopyranose = L-ribulose. It participates in carbohydrate degradation; L-arabinose degradation via L-ribulose; D-xylulose 5-phosphate from L-arabinose (bacterial route): step 1/3. Catalyzes the conversion of L-arabinose to L-ribulose. This Yersinia pseudotuberculosis serotype O:3 (strain YPIII) protein is L-arabinose isomerase.